Here is a 1500-residue protein sequence, read N- to C-terminus: MTRILTAFKVVRTLKTGFGFTNVTAHQKWKFSRPGIRLLSVKAQTAHIVLEDGTKMKGYSFGHPSSVAGEVVFNTGLGGYPEAITDPAYKGQILTMANPIIGNGGAPDTTALDELGLSKYLESNGIKVSGLLVLDYSKDYNHWLATKSLGQWLQEEKVPAIYGVDTRMLTKIIRDKGTMLGKIEFEGQPVDFVDPNKQNLIAEVSTKDVKVYGKGNPTKVVAVDCGIKNNVIRLLVKRGAEVHLVPWNHDFTKMEYDGILIAGGPGNPALAEPLIQNVRKILESDRKEPLFGISTGNLITGLAAGAKTYKMSMANRGQNQPVLNITNKQAFITAQNHGYALDNTLPAGWKPLFVNVNDQTNEGIMHESKPFFAVQFHPEVTPGPIDTEYLFDSFFSLIKKGKATTITSVLPKPALVASRVEVSKVLILGSGGLSIGQAGEFDYSGSQAVKAMKEENVKTVLMNPNIASVQTNEVGLKQADTVYFLPITPQFVTEVIKAEQPDGLILGMGGQTALNCGVELFKRGVLKEYGVKVLGTSVESIMATEDRQLFSDKLNEINEKIAPSFAVESIEDALKAADTIGYPVMIRSAYALGGLGSGICPNRETLMDLSTKAFAMTNQILVEKSVTGWKEIEYEVVRDADDNCVTVCNMENVDAMGVHTGDSVVVAPAQTLSNAEFQMLRRTSINVVRHLGIVGECNIQFALHPTSMEYCIIEVNARLSRSSALASKATGYPLAFIAAKIALGIPLPEIKNVVSGKTSACFEPSLDYMVTKIPRWDLDRFHGTSSRIGSSMKSVGEVMAIGRTFEESFQKALRMCHPSIEGFTPRLPMNKEWPSNLDLRKELSEPSSTRIYAIAKAIDDNMSLDEIEKLTYIDKWFLYKMRDILNMEKTLKGLNSESMTEETLKRAKEIGFSDKQISKCLGLTEAQTRELRLKKNIHPWVKQIDTLAAEYPSVTNYLYVTYNGQEHDVNFDDHGMMVLGCGPYHIGSSVEFDWCAVSSIRTLRQLGKKTVVVNCNPETVSTDFDECDKLYFEELSLERILDIYHQEACGGCIISVGGQIPNNLAVPLYKNGVKIMGTSPLQIDRAEDRSIFSAVLDELKVAQAPWKAVNTLNEALEFAKSVDYPCLLRPSYVLSGSAMNVVFSEDEMKKFLEEATRVSQEHPVVLTKFVEGAREVEMDAVGKDGRVISHAISEHVEDAGVHSGDATLMLPTQTISQGAIEKVKDATRKIAKAFAISGPFNVQFLVKGNDVLVIECNLRASRSFPFVSKTLGVDFIDVATKVMIGENVDEKHLPTLDHPIIPADYVAIKAPMFSWPRLRDADPILRCEMASTGEVACFGEGIHTAFLKAMLSTGFKIPQKGILIGIQQSFRPRFLGVAEQLHNEGFKLFATEATSDWLNANNVPATPVAWPSQEGQNPSLSSIRKLIRDGSIDLVINLPNNNTKFVHDNYVIRRTAVDSGIPLLTNFQVTKLFAEAVQKSRKVDSKSLFHYRQYSAGKAA.

Residues 1–38 (MTRILTAFKVVRTLKTGFGFTNVTAHQKWKFSRPGIRL) constitute a mitochondrion transit peptide. The tract at residues 39-218 (LSVKAQTAHI…VKVYGKGNPT (180 aa)) is anthranilate phosphoribosyltransferase homolog. N6-acetyllysine; alternate occurs at positions 55, 57, and 119. Lys55 carries the post-translational modification N6-glutaryllysine; alternate. N6-succinyllysine; alternate is present on residues Lys55, Lys57, and Lys119. Ser148 is subject to Phosphoserine. Residues Lys157 and Lys171 each carry the N6-acetyllysine; alternate modification. An N6-succinyllysine; alternate modification is found at Lys157. At Lys171 the chain carries N6-glutaryllysine; alternate. The residue at position 176 (Lys176) is an N6-glutaryllysine. Lys182 and Lys197 each carry N6-acetyllysine. An N6-acetyllysine; alternate mark is found at Lys207, Lys210, Lys214, Lys219, and Lys228. N6-glutaryllysine; alternate is present on residues Lys207, Lys210, Lys214, Lys219, and Lys228. Residue Lys207 is modified to N6-succinyllysine; alternate. Residue Lys214 is modified to N6-succinyllysine; alternate. A Glutamine amidotransferase type-1 domain is found at 219 to 404 (KVVAVDCGIK…FSLIKKGKAT (186 aa)). Position 237 is an N6-glutaryllysine (Lys237). Residues Lys280, Lys287, Lys307, and Lys310 each carry the N6-acetyllysine; alternate modification. The residue at position 280 (Lys280) is an N6-glutaryllysine; alternate. Residues Lys287 and Lys307 each carry the N6-succinyllysine; alternate modification. An N6-glutaryllysine; alternate mark is found at Lys307 and Lys310. An N6-succinyllysine modification is found at Lys400. 4 positions are modified to N6-glutaryllysine; alternate: Lys402, Lys412, Lys453, and Lys458. An N6-succinyllysine; alternate mark is found at Lys402 and Lys412. N6-acetyllysine; alternate is present on residues Lys412, Lys453, Lys458, Lys522, Lys527, and Lys532. N6-succinyllysine; alternate is present on residues Lys458, Lys522, and Lys527. An N6-glutaryllysine; alternate mark is found at Lys527 and Lys532. Ser537 carries the post-translational modification Phosphoserine; alternate. O-linked (GlcNAc) serine; alternate glycosylation is present at Ser537. At Ser540 the chain carries Phosphoserine. An ATP-grasp 1 domain is found at 551-743 (SDKLNEINEK…LAFIAAKIAL (193 aa)). N6-acetyllysine; alternate is present on residues Lys553 and Lys560. Lys553 is modified (N6-glutaryllysine; alternate). 2 positions are modified to N6-succinyllysine; alternate: Lys553 and Lys560. Residue Ser569 is modified to Phosphoserine. 2 positions are modified to N6-acetyllysine; alternate: Lys575 and Lys612. N6-succinyllysine; alternate is present on residues Lys575 and Lys612. Lys630 is subject to N6-acetyllysine. At Lys728 the chain carries N6-glutaryllysine. An N6-acetyllysine; alternate mark is found at Lys751, Lys757, Lys772, Lys793, Lys811, and Lys831. Residues Lys751 and Lys757 each carry the N6-succinyllysine; alternate modification. N6-glutaryllysine; alternate is present on residues Lys757, Lys772, Lys793, and Lys811. N6-succinyllysine; alternate is present on Lys793. The residue at position 831 (Lys831) is an N6-succinyllysine; alternate. Ser835 carries the post-translational modification Phosphoserine. Residues Lys841 and Lys856 each carry the N6-acetyllysine; alternate modification. N6-glutaryllysine; alternate is present on residues Lys841 and Lys856. Lys869 bears the N6-glutaryllysine mark. 3 positions are modified to N6-acetyllysine; alternate: Lys875, Lys889, and Lys892. N6-glutaryllysine; alternate is present on residues Lys875, Lys889, and Lys892. Lys875, Lys889, and Lys892 each carry N6-succinyllysine; alternate. 2 positions are modified to phosphoserine: Ser896 and Ser898. Lys905 is subject to N6-glutaryllysine. Residues Lys908, Lys915, and Lys919 each carry the N6-acetyllysine; alternate modification. Lys908, Lys915, and Lys919 each carry N6-glutaryllysine; alternate. Lys915 and Lys919 each carry N6-succinyllysine; alternate. Position 935 is an N6-acetyllysine (Lys935). The residue at position 1036 (Ser1036) is a Phosphoserine. At Lys1074 the chain carries N6-acetyllysine; alternate. Lys1074 carries the post-translational modification N6-glutaryllysine; alternate. Lys1074 carries the post-translational modification N6-succinyllysine; alternate. A phosphoserine mark is found at Ser1079, Ser1090, and Ser1093. The region spanning 1093–1284 (SAVLDELKVA…FIDVATKVMI (192 aa)) is the ATP-grasp 2 domain. Lys1100 bears the N6-acetyllysine; alternate mark. Position 1100 is an N6-succinyllysine; alternate (Lys1100). The residue at position 1149 (Lys1149) is an N6-succinyllysine. At Lys1150 the chain carries N6-glutaryllysine. N6-acetyllysine; alternate occurs at positions 1168 and 1183. N6-glutaryllysine; alternate is present on residues Lys1168 and Lys1183. 2 positions are modified to N6-succinyllysine; alternate: Lys1168 and Lys1183. The residue at position 1203 (Ser1203) is a Phosphoserine. Position 1222 is an N6-acetyllysine (Lys1222). Lys1224 bears the N6-glutaryllysine mark. N6-acetyllysine; alternate is present on residues Lys1232, Lys1269, and Lys1291. N6-succinyllysine; alternate is present on residues Lys1232, Lys1269, and Lys1291. O-linked (GlcNAc) serine glycosylation is present at Ser1331. The O-linked (GlcNAc) threonine glycan is linked to Thr1332. In terms of domain architecture, MGS-like spans 1355–1500 (FKIPQKGILI…YRQYSAGKAA (146 aa)). Lys1356 carries the post-translational modification N6-acetyllysine; alternate. 2 positions are modified to N6-glutaryllysine; alternate: Lys1356 and Lys1360. Residues Lys1356 and Lys1360 each carry the N6-succinyllysine; alternate modification. 3 residues coordinate N-acetyl-L-glutamate: Thr1391, Thr1394, and Trp1410. Ser1419 and Ser1431 each carry phosphoserine. Residues Asn1437 and Asn1440 each contribute to the N-acetyl-L-glutamate site. Lys1444 carries the post-translational modification N6-acetyllysine; alternate. Lys1444 is subject to N6-succinyllysine; alternate. N-acetyl-L-glutamate is bound at residue Asn1449. An N6-acetyllysine; alternate mark is found at Lys1471, Lys1479, and Lys1486. 3 positions are modified to N6-succinyllysine; alternate: Lys1471, Lys1479, and Lys1486. 2 positions are modified to N6-glutaryllysine; alternate: Lys1479 and Lys1486.

In terms of assembly, can form homooligomers (monomers as predominant form and dimers). Post-translationally, undergoes proteolytic cleavage in the C-terminal region corresponding to the loss of approximately 12 AA residues from the C-terminus. Succinylated at Lys-287 and Lys-1291. Desuccinylated at Lys-1291 by SIRT5, leading to activation. In terms of processing, glutarylated. Glutarylation levels increase during fasting. Deglutarylated by SIRT5 at Lys-55, Lys-219, Lys-412, Lys-889, Lys-892, Lys-915, Lys-1360 and Lys-1486, leading to activation. In terms of tissue distribution, primarily in the liver and small intestine.

Its subcellular location is the mitochondrion. The protein localises to the nucleus. The protein resides in the nucleolus. It localises to the cell membrane. It catalyses the reaction hydrogencarbonate + NH4(+) + 2 ATP = carbamoyl phosphate + 2 ADP + phosphate + 2 H(+). Requires N-acetyl-L-glutamate (NAG) as an allosteric activator. Activated by glycerol in the absence of NAG, whereas in the presence of NAG it is inhibited by increasing concentrations of glycerol. Involved in the urea cycle of ureotelic animals where the enzyme plays an important role in removing excess ammonia from the cell. The protein is Carbamoyl-phosphate synthase [ammonia], mitochondrial (CPS1) of Homo sapiens (Human).